The following is a 224-amino-acid chain: 4-aminobenzoate synthase (224 aa).

Residues E77, H84, E138, H169, D173, and H176 each coordinate Fe(2+).

It belongs to the CADD family. Homodimer. Fe(2+) is required as a cofactor. Requires Mn(2+) as cofactor.

In terms of biological role, involved in de novo para-aminobenzoate (PABA) biosynthesis. Acts as a self-sacrificing or 'suicide' enzyme that utilizes its own active site tyrosine residue(s) as the substrate for PABA synthesis. The side chain of the tyrosine residue is released from the protein backbone via cleavage of the C(alpha)-C(beta) bond, leaving a glycine in place of the original tyrosine residue. Reaction requires O(2) and a reduced dimetal cofactor. This is 4-aminobenzoate synthase from Chlamydia pneumoniae (Chlamydophila pneumoniae).